The following is a 292-amino-acid chain: Probable xyloglucan endotransglucosylase/hydrolase protein 6 (292 aa).

An N-terminal signal peptide occupies residues 1 to 30 (MAKIYSPSFPGTLCLCIFTLLTLMFIRVSA). Positions 31–224 (RPATFVEDFK…WSKAPFYAYY (194 aa)) constitute a GH16 domain. Glu-110 (nucleophile) is an active-site residue. The active-site Proton donor is Glu-114. Position 114 (Glu-114) interacts with xyloglucan. Residue Asn-118 is glycosylated (N-linked (GlcNAc...) asparagine). Residues 127–129 (QTN), 137–139 (DRE), 203–204 (DW), and Gly-208 each bind xyloglucan. Disulfide bonds link Cys-232–Cys-240 and Cys-277–Cys-290. Arg-282 contacts xyloglucan.

It belongs to the glycosyl hydrolase 16 family. XTH group 1 subfamily. In terms of processing, contains at least one intrachain disulfide bond essential for its enzymatic activity.

The protein localises to the secreted. It localises to the cell wall. Its subcellular location is the extracellular space. The protein resides in the apoplast. The enzyme catalyses breaks a beta-(1-&gt;4) bond in the backbone of a xyloglucan and transfers the xyloglucanyl segment on to O-4 of the non-reducing terminal glucose residue of an acceptor, which can be a xyloglucan or an oligosaccharide of xyloglucan.. Its function is as follows. Catalyzes xyloglucan endohydrolysis (XEH) and/or endotransglycosylation (XET). Cleaves and religates xyloglucan polymers, an essential constituent of the primary cell wall, and thereby participates in cell wall construction of growing tissues. This chain is Probable xyloglucan endotransglucosylase/hydrolase protein 6 (XTH6), found in Arabidopsis thaliana (Mouse-ear cress).